The primary structure comprises 1250 residues: Protein suppressor of variegation 3-7 (1250 aa).

Disordered regions lie at residues Leu-107–His-148 and His-160–Arg-186. Over residues Ser-132–Ala-141 the composition is skewed to polar residues. Acidic residues predominate over residues Asp-164 to Ser-175. A phosphoserine mark is found at Ser-165, Ser-175, and Ser-176. 4 C2H2-type zinc fingers span residues Cys-217–His-236, Cys-319–His-343, Cys-425–His-446, and Cys-487–His-512. Over residues His-343–Lys-354 the composition is skewed to basic and acidic residues. Residues His-343–Met-398 are disordered. Positions Val-525–Ser-564 are disordered. The span at Ala-543 to Thr-552 shows a compositional bias: low complexity. Positions Asp-553 to Trp-563 are enriched in acidic residues. The C2H2-type 5 zinc finger occupies Gln-605–His-629. Residues Lys-642–Asp-684 are disordered. Over residues Asp-657 to Ser-679 the composition is skewed to acidic residues. 2 C2H2-type zinc fingers span residues Cys-737 to His-761 and Cys-829 to His-852. The span at Lys-851 to Arg-860 shows a compositional bias: basic and acidic residues. Positions Lys-851–Met-915 are disordered. A phosphoserine mark is found at Ser-871 and Ser-873. Residues Asp-879–Val-897 are compositionally biased toward basic and acidic residues. Ser-975 is modified (phosphoserine). Residues Arg-987–Arg-1026 enclose the BESS domain. A compositionally biased stretch (low complexity) spans Ala-1032–Val-1055. Disordered stretches follow at residues Ala-1032–Ala-1060, Thr-1079–Ala-1116, Gln-1154–Ser-1180, and Asn-1205–Gln-1236. Polar residues-rich tracts occupy residues Thr-1079 to Asn-1091 and Gly-1104 to Gly-1114. Residues Thr-1206–Pro-1224 are compositionally biased toward low complexity.

Interacts with Su(var)39 through the BESS domain.

It localises to the nucleus. In terms of biological role, dose-limiting factor in position-effect variegation, the inactivation in some cells of a gene translocated next to heterochromatin. It could play a role in chromosome condensation. This is Protein suppressor of variegation 3-7 (Su(var)3-7) from Drosophila melanogaster (Fruit fly).